Reading from the N-terminus, the 69-residue chain is MKAREIRELTNEELLQKLSDLKAELFNLRFQLATGQLDNPMRIRDVRKTIARIKTILRERELGIRQNKA.

Belongs to the universal ribosomal protein uL29 family.

The protein is Large ribosomal subunit protein uL29 of Thermoanaerobacter pseudethanolicus (strain ATCC 33223 / 39E) (Clostridium thermohydrosulfuricum).